The chain runs to 220 residues: Ribosomal RNA large subunit methyltransferase E (220 aa).

Residues Gly-60, Trp-62, Asp-92, Asp-108, and Asp-133 each contribute to the S-adenosyl-L-methionine site. The active-site Proton acceptor is Lys-173.

This sequence belongs to the class I-like SAM-binding methyltransferase superfamily. RNA methyltransferase RlmE family.

The protein localises to the cytoplasm. It catalyses the reaction uridine(2552) in 23S rRNA + S-adenosyl-L-methionine = 2'-O-methyluridine(2552) in 23S rRNA + S-adenosyl-L-homocysteine + H(+). Its function is as follows. Specifically methylates the uridine in position 2552 of 23S rRNA at the 2'-O position of the ribose in the fully assembled 50S ribosomal subunit. The sequence is that of Ribosomal RNA large subunit methyltransferase E from Burkholderia thailandensis (strain ATCC 700388 / DSM 13276 / CCUG 48851 / CIP 106301 / E264).